Here is a 158-residue protein sequence, read N- to C-terminus: Siroheme decarboxylase beta subunit (158 aa).

The protein belongs to the Ahb/Nir family. Forms a heterodimer composed of AhbA and AhbB.

The catalysed reaction is siroheme + 2 H(+) = 12,18-didecarboxysiroheme + 2 CO2. It functions in the pathway porphyrin-containing compound metabolism; protoheme biosynthesis. In terms of biological role, involved in siroheme-dependent heme b biosynthesis. Catalyzes the decarboxylation of siroheme into didecarboxysiroheme. In Oleidesulfovibrio alaskensis (strain ATCC BAA-1058 / DSM 17464 / G20) (Desulfovibrio alaskensis), this protein is Siroheme decarboxylase beta subunit.